We begin with the raw amino-acid sequence, 367 residues long: Beta sliding clamp (367 aa).

The protein belongs to the beta sliding clamp family. As to quaternary structure, forms a ring-shaped head-to-tail homodimer around DNA which binds and tethers DNA polymerases and other proteins to the DNA. The DNA replisome complex has a single clamp-loading complex (3 tau and 1 each of delta, delta', psi and chi subunits) which binds 3 Pol III cores (1 core on the leading strand and 2 on the lagging strand) each with a beta sliding clamp dimer. Additional proteins in the replisome are other copies of gamma, psi and chi, Ssb, DNA helicase and RNA primase.

The protein localises to the cytoplasm. Its function is as follows. Confers DNA tethering and processivity to DNA polymerases and other proteins. Acts as a clamp, forming a ring around DNA (a reaction catalyzed by the clamp-loading complex) which diffuses in an ATP-independent manner freely and bidirectionally along dsDNA. Initially characterized for its ability to contact the catalytic subunit of DNA polymerase III (Pol III), a complex, multichain enzyme responsible for most of the replicative synthesis in bacteria; Pol III exhibits 3'-5' exonuclease proofreading activity. The beta chain is required for initiation of replication as well as for processivity of DNA replication. The polypeptide is Beta sliding clamp (dnaN) (Proteus mirabilis).